The sequence spans 514 residues: MKNTLKLIFFVLLLFALFVSLRMFIDVAFYSDVIGIKDVSILGIISILFTVSAFLIGCVIFLENRHPSKTLTWLIVLGIFPVFGFFAYLLFGQNFRRKRMFQKKALLDEQAFLQYKGHEDYEERILRNHKHQELLFRLADRLGALNISFQTETRTLTNGDETFQAILDGLKRAKHHIHMEYYIVRDDKLGTEIKDILIQKSKEGVVVRFLYDAVGSFKLSKSYIEELNDAGVEMIPFFPVRFPILNDKINYRNHRKIVIIDGNEGFVGGLNIGDEYLGKDKYFGFWRDTHLYLRGEAVQSLQLIFLQDWFYMTGEAVLAPEYLQAKAVEGEHWGGVQLVAGGPDNKWETIKHLYFAMIASARKSIWIATPYFIPDDDILSALKVAALAGIDVRLLMPSKPDKRTVFYASRSYFPELLDAGVKIYEYEKGFLHSKVVIVDSDLASIGTANMDMRSFHLNFEVNAFLYDTDSIRKLVQDFKDDLEESSEIHVDRFHKRRLHRRIVESTYRLLSPLL.

The next 3 membrane-spanning stretches (helical) occupy residues 7–27, 41–61, and 71–91; these read LIFF…FIDV, ILGI…CVIF, and LTWL…YLLF. 2 consecutive PLD phosphodiesterase domains span residues 249–276 and 427–454; these read INYR…GDEY and EKGF…DMRS. Catalysis depends on residues histidine 254, lysine 256, aspartate 261, histidine 432, lysine 434, and aspartate 439.

It belongs to the phospholipase D family. Cardiolipin synthase subfamily.

Its subcellular location is the cell membrane. It catalyses the reaction 2 a 1,2-diacyl-sn-glycero-3-phospho-(1'-sn-glycerol) = a cardiolipin + glycerol. In terms of biological role, catalyzes the reversible phosphatidyl group transfer from one phosphatidylglycerol molecule to another to form cardiolipin (CL) (diphosphatidylglycerol) and glycerol. This chain is Cardiolipin synthase 2 (cls2), found in Bacillus anthracis.